The sequence spans 330 residues: D-alanine--D-alanine ligase (330 aa).

Residues 122 to 323 form the ATP-grasp domain; sequence NRFLSGFGIR…MKEVLCTIIR (202 aa). 151–206 serves as a coordination point for ATP; that stretch reads TARMGLPLFVKPNVGGSSIATTKVVEAAQLLPAIGQAFSEGEEVMIERLICGTEVT. Mg(2+) is bound by residues Asp-277, Glu-290, and Asn-292.

The protein belongs to the D-alanine--D-alanine ligase family. Requires Mg(2+) as cofactor. The cofactor is Mn(2+).

It localises to the cytoplasm. It carries out the reaction 2 D-alanine + ATP = D-alanyl-D-alanine + ADP + phosphate + H(+). It functions in the pathway cell wall biogenesis; peptidoglycan biosynthesis. In terms of biological role, cell wall formation. The polypeptide is D-alanine--D-alanine ligase (Porphyromonas gingivalis (strain ATCC 33277 / DSM 20709 / CIP 103683 / JCM 12257 / NCTC 11834 / 2561)).